Reading from the N-terminus, the 421-residue chain is UDP-N-acetylglucosamine 1-carboxyvinyltransferase (421 aa).

Position 22–23 (22–23 (KN)) interacts with phosphoenolpyruvate. Residue Arg-93 coordinates UDP-N-acetyl-alpha-D-glucosamine. The active-site Proton donor is Cys-117. Cys-117 bears the 2-(S-cysteinyl)pyruvic acid O-phosphothioketal mark. UDP-N-acetyl-alpha-D-glucosamine contacts are provided by residues 122–126 (RPVDL), Asp-308, and Leu-330.

The protein belongs to the EPSP synthase family. MurA subfamily.

The protein localises to the cytoplasm. It carries out the reaction phosphoenolpyruvate + UDP-N-acetyl-alpha-D-glucosamine = UDP-N-acetyl-3-O-(1-carboxyvinyl)-alpha-D-glucosamine + phosphate. Its pathway is cell wall biogenesis; peptidoglycan biosynthesis. In terms of biological role, cell wall formation. Adds enolpyruvyl to UDP-N-acetylglucosamine. The chain is UDP-N-acetylglucosamine 1-carboxyvinyltransferase from Wolinella succinogenes (strain ATCC 29543 / DSM 1740 / CCUG 13145 / JCM 31913 / LMG 7466 / NCTC 11488 / FDC 602W) (Vibrio succinogenes).